A 237-amino-acid polypeptide reads, in one-letter code: Carboxy-S-adenosyl-L-methionine synthase (237 aa).

S-adenosyl-L-methionine contacts are provided by residues Tyr-40, 65 to 67 (GCS), 116 to 117 (DI), Asn-131, and Arg-194.

It belongs to the class I-like SAM-binding methyltransferase superfamily. Cx-SAM synthase family. In terms of assembly, homodimer.

The catalysed reaction is prephenate + S-adenosyl-L-methionine = carboxy-S-adenosyl-L-methionine + 3-phenylpyruvate + H2O. In terms of biological role, catalyzes the conversion of S-adenosyl-L-methionine (SAM) to carboxy-S-adenosyl-L-methionine (Cx-SAM). The sequence is that of Carboxy-S-adenosyl-L-methionine synthase from Dichelobacter nodosus (strain VCS1703A).